The sequence spans 301 residues: Putative phosphoenolpyruvate synthase regulatory protein (301 aa).

Over residues methionine 1–proline 24 the composition is skewed to low complexity. Residues methionine 1–glycine 27 are disordered. ADP is bound at residue glycine 181 to threonine 188.

The protein belongs to the pyruvate, phosphate/water dikinase regulatory protein family. PSRP subfamily.

The catalysed reaction is [pyruvate, water dikinase] + ADP = [pyruvate, water dikinase]-phosphate + AMP + H(+). It carries out the reaction [pyruvate, water dikinase]-phosphate + phosphate + H(+) = [pyruvate, water dikinase] + diphosphate. Functionally, bifunctional serine/threonine kinase and phosphorylase involved in the regulation of the phosphoenolpyruvate synthase (PEPS) by catalyzing its phosphorylation/dephosphorylation. The chain is Putative phosphoenolpyruvate synthase regulatory protein from Cupriavidus pinatubonensis (strain JMP 134 / LMG 1197) (Cupriavidus necator (strain JMP 134)).